Consider the following 225-residue polypeptide: Methylthioribulose-1-phosphate dehydratase (225 aa).

Residues H106 and H108 each contribute to the Zn(2+) site.

It belongs to the aldolase class II family. MtnB subfamily. Requires Zn(2+) as cofactor.

The enzyme catalyses 5-(methylsulfanyl)-D-ribulose 1-phosphate = 5-methylsulfanyl-2,3-dioxopentyl phosphate + H2O. Its pathway is amino-acid biosynthesis; L-methionine biosynthesis via salvage pathway; L-methionine from S-methyl-5-thio-alpha-D-ribose 1-phosphate: step 2/6. Catalyzes the dehydration of methylthioribulose-1-phosphate (MTRu-1-P) into 2,3-diketo-5-methylthiopentyl-1-phosphate (DK-MTP-1-P). The polypeptide is Methylthioribulose-1-phosphate dehydratase (Xanthomonas oryzae pv. oryzae (strain PXO99A)).